A 679-amino-acid polypeptide reads, in one-letter code: Glycine--tRNA ligase beta subunit (679 aa).

Belongs to the class-II aminoacyl-tRNA synthetase family. In terms of assembly, tetramer of two alpha and two beta subunits.

Its subcellular location is the cytoplasm. The enzyme catalyses tRNA(Gly) + glycine + ATP = glycyl-tRNA(Gly) + AMP + diphosphate. The chain is Glycine--tRNA ligase beta subunit from Streptococcus uberis (strain ATCC BAA-854 / 0140J).